A 281-amino-acid polypeptide reads, in one-letter code: Alcohol dehydrogenase-related 31 kDa protein (281 aa).

11-34 contacts NAD(+); sequence YVADCGGIALETSKVLMTKNIAKL. Residue S139 coordinates substrate. Y152 acts as the Proton acceptor in catalysis.

This sequence belongs to the short-chain dehydrogenases/reductases (SDR) family.

The sequence is that of Alcohol dehydrogenase-related 31 kDa protein (Adhr) from Drosophila ambigua (Fruit fly).